The sequence spans 389 residues: S-adenosylmethionine synthase (389 aa).

H15 contacts ATP. D17 contributes to the Mg(2+) binding site. E43 contributes to the K(+) binding site. E56 and Q99 together coordinate L-methionine. The tract at residues 99–109 (QSPDIAQGVNE) is flexible loop. Residues 166–168 (DAK), 234–235 (RF), D243, 249–250 (RK), A266, and K270 each bind ATP. Residue D243 participates in L-methionine binding. K274 is an L-methionine binding site.

Belongs to the AdoMet synthase family. In terms of assembly, homotetramer; dimer of dimers. The cofactor is Mg(2+). K(+) serves as cofactor.

It localises to the cytoplasm. It catalyses the reaction L-methionine + ATP + H2O = S-adenosyl-L-methionine + phosphate + diphosphate. It functions in the pathway amino-acid biosynthesis; S-adenosyl-L-methionine biosynthesis; S-adenosyl-L-methionine from L-methionine: step 1/1. Its function is as follows. Catalyzes the formation of S-adenosylmethionine (AdoMet) from methionine and ATP. The overall synthetic reaction is composed of two sequential steps, AdoMet formation and the subsequent tripolyphosphate hydrolysis which occurs prior to release of AdoMet from the enzyme. The chain is S-adenosylmethionine synthase from Neisseria meningitidis serogroup C (strain 053442).